Consider the following 201-residue polypeptide: MSEALNELASYLREARGALIADAEVKYGELTVTAKAENLIALLTFLRDDVQCGFVSFIDVCGVDYPQRPDRFDVVYHLLSPRQNQRVRVKVATGENDPVPSATSVFPGADWFEREAYDMYGILFTGHPDLRRILTDYGFEGYPLRKDFPLTGFVEVRYDNEAKRVVYEPVELKQEFRNFDFLSPWEGTEYVLPGDEKARPR.

Belongs to the complex I 30 kDa subunit family. As to quaternary structure, NDH-1 is composed of 14 different subunits. Subunits NuoB, C, D, E, F, and G constitute the peripheral sector of the complex.

Its subcellular location is the cell inner membrane. The catalysed reaction is a quinone + NADH + 5 H(+)(in) = a quinol + NAD(+) + 4 H(+)(out). Functionally, NDH-1 shuttles electrons from NADH, via FMN and iron-sulfur (Fe-S) centers, to quinones in the respiratory chain. The immediate electron acceptor for the enzyme in this species is believed to be ubiquinone. Couples the redox reaction to proton translocation (for every two electrons transferred, four hydrogen ions are translocated across the cytoplasmic membrane), and thus conserves the redox energy in a proton gradient. This is NADH-quinone oxidoreductase subunit C 1 from Rhizobium meliloti (strain 1021) (Ensifer meliloti).